We begin with the raw amino-acid sequence, 239 residues long: Putative CRISPR-associated endoribonuclease-like protein Cas6nc (239 aa).

Belongs to the CRISPR-associated protein Cas6/Cse3/CasE family. Monomer; homodimer when crystallized in the presence of crRNA. Varying the crRNA sequence varies degree of oligomerization and structure.

Functionally, CRISPR (clustered regularly interspaced short palindromic repeat), is an adaptive immune system that provides protection against mobile genetic elements (viruses, transposable elements and conjugative plasmids). CRISPR clusters contain sequences complementary to antecedent mobile elements and target invading nucleic acids. CRISPR clusters are transcribed and processed into CRISPR RNA (crRNA), also called psiRNA (prokaryotic silencing) in this organism (Potential). The polypeptide is Putative CRISPR-associated endoribonuclease-like protein Cas6nc (cas6nc) (Pyrococcus horikoshii (strain ATCC 700860 / DSM 12428 / JCM 9974 / NBRC 100139 / OT-3)).